The chain runs to 206 residues: MRYTVALTGGIGSGKSTVADAFADLGITVIDADIIARQMVEPGQPALNAIAEHFGSELIAADGTLRRRALRERIFSHPEEKAWLNALLHPLIQQETQQQFQQATSPYVLWVVPLLVENRLYQKANRVLVVDVMPETQLIRTMQRDDVTREHVEHILAAQATREARLAVADDVIDNNGAPDAIASDVARLHASYLKLASQFVSQEKP.

Positions 4-200 (TVALTGGIGS…ASYLKLASQF (197 aa)) constitute a DPCK domain. Residue 12 to 17 (GSGKST) coordinates ATP.

The protein belongs to the CoaE family.

It is found in the cytoplasm. It catalyses the reaction 3'-dephospho-CoA + ATP = ADP + CoA + H(+). It participates in cofactor biosynthesis; coenzyme A biosynthesis; CoA from (R)-pantothenate: step 5/5. In terms of biological role, catalyzes the phosphorylation of the 3'-hydroxyl group of dephosphocoenzyme A to form coenzyme A. This is Dephospho-CoA kinase from Salmonella paratyphi A (strain ATCC 9150 / SARB42).